The following is a 127-amino-acid chain: Promotilin (127 aa).

Residues 1-25 (MLSRKAVAALLLVHVTAMLASQTEG) form the signal peptide. Residues 41–67 (REQNKRLRKSLRVQQRSKAAGRLEPQE) form a disordered region.

It belongs to the motilin family. In terms of tissue distribution, present in the gut mucosa with the exception of the gastric corpus. Also present in medulla oblongata, nucleus of the solitary tract, hypophysis, spinal cord, hypothalamus, and cerebellum but not in the cerebral cortex.

It localises to the secreted. In terms of biological role, plays an important role in the regulation of interdigestive gastrointestinal motility and indirectly causes rhythmic contraction of duodenal and colonic smooth muscle. The chain is Promotilin (MLN) from Cavia porcellus (Guinea pig).